The primary structure comprises 63 residues: MLDQKLLSLLVCPVTKAPLIYDEPKQELVCVASGLAYPIRDGIPVMLEGEARVLSQEEKESYK.

This sequence belongs to the UPF0434 family.

The chain is UPF0434 protein Sde_1297 from Saccharophagus degradans (strain 2-40 / ATCC 43961 / DSM 17024).